The primary structure comprises 426 residues: MGPLPAPSCTQRITWKGLLLTASLLNFWNPPTTAEVTIEAQPPKVSEGKDVLLLVHNLPQNLPGYFWYKGEMTDLYHYIISYIVDGKIIIYGPAYSGRETVYSNASLLIQNVTRKDAGTYTLHIIKRGDETREEIRHFTFTLYLETPKPYISSSNLNPREAMEAVRLICDPETLDASYLWWMNGQSLPVTHRLQLSKTNRTLYLFGVTKYIAGPYECEIRNPVSASRSDPVTLNLLPKLPIPYITINNLNPRENKDVLAFTCEPKSENYTYIWWLNGQSLPVSPGVKRPIENRILILPSVTRNETGPYQCEIRDRYGGLRSNPVILNVLYGPDLPRIYPSFTYYRSGENLDLSCFTESNPPAEYFWTINGKFQQSGQKLFIPQITRNHSGLYACSVHNSATGKEISKSMTVKVSGPCHGDLTESQS.

Residues 1–34 (MGPLPAPSCTQRITWKGLLLTASLLNFWNPPTTA) form the signal peptide. The Ig-like V-type domain maps to 35-144 (EVTIEAQPPK…IRHFTFTLYL (110 aa)). N-linked (GlcNAc...) asparagine glycosylation is found at asparagine 104 and asparagine 111. Residues 127–129 (RGD) carry the Cell attachment site motif. 3 consecutive Ig-like C2-type domains span residues 147 to 234 (PKPY…VTLN), 242 to 326 (PYIT…PVIL), and 335 to 410 (PRIY…KSMT). Intrachain disulfides connect cysteine 169-cysteine 217, cysteine 262-cysteine 310, and cysteine 354-cysteine 394. Asparagine 199, asparagine 268, asparagine 303, and asparagine 387 each carry an N-linked (GlcNAc...) asparagine glycan.

It belongs to the immunoglobulin superfamily. CEA family. As to quaternary structure, interacts with latency-associated peptide; leading to TGFB1 activation.

It is found in the secreted. Functionally, binds to the small latent transforming growth factor-beta complex, consisting of the N-terminal TGFB1 latency-associated peptide (LAP) and the mature form of TGFB1, thereby leading to the activation of TGFB1. The activation of TGFB1 leads to stimulation of naive CD4(+) T-cells to increase FoxP3 expression and to an increase in the number of FoxP3(+) regulatory T-cells. Induces the differentiation of a suppressive CD4(+)LAP(+)FoxP3(-) T-cell subset. Induces the secretion of TGFB1 in macrophages, but not in activated CD4(+) T-cells. May reduce the expression of several pro-inflammatory cytokines and chemokines by CD4(+) T-cells, including IL2 and IL6. In Homo sapiens (Human), this protein is Pregnancy-specific beta-1-glycoprotein 9 (PSG9).